The primary structure comprises 486 residues: Betaine aldehyde dehydrogenase (486 aa).

K(+)-binding residues include threonine 23 and aspartate 90. Residue 147-149 coordinates NAD(+); sequence GAW. The active-site Charge relay system is lysine 159. Residues 173-176 and 226-229 each bind NAD(+); these read KPSE and ESGT. Leucine 241 provides a ligand contact to K(+). The Proton acceptor role is filled by glutamate 247. NAD(+) contacts are provided by glycine 249, cysteine 281, and glutamate 382. Residue cysteine 281 is the Nucleophile of the active site. Residue cysteine 281 is modified to Cysteine sulfenic acid (-SOH). Residues lysine 452 and glycine 455 each contribute to the K(+) site. Glutamate 459 acts as the Charge relay system in catalysis.

This sequence belongs to the aldehyde dehydrogenase family. Dimer of dimers. The cofactor is K(+).

The catalysed reaction is betaine aldehyde + NAD(+) + H2O = glycine betaine + NADH + 2 H(+). It participates in amine and polyamine biosynthesis; betaine biosynthesis via choline pathway; betaine from betaine aldehyde: step 1/1. Functionally, involved in the biosynthesis of the osmoprotectant glycine betaine. Catalyzes the irreversible oxidation of betaine aldehyde to the corresponding acid. This Vibrio parahaemolyticus serotype O3:K6 (strain RIMD 2210633) protein is Betaine aldehyde dehydrogenase.